Consider the following 879-residue polypeptide: Metabotropic glutamate receptor 3 (879 aa).

A signal peptide spans 1–24 (MKMLTRLQVLTLALFSKGFLLSLG). Over 25–577 (DHNFLRREIK…DYIRWEDAWA (553 aa)) the chain is Extracellular. A disulfide bond links C57 and C99. L-glutamate-binding positions include S151 and 172–174 (AST). Residue N209 is glycosylated (N-linked (GlcNAc...) asparagine). Position 222 (Y222) interacts with L-glutamate. Cystine bridges form between C240-C527, C361-C373, C412-C419, C509-C528, C513-C531, C534-C546, and C549-C562. N-linked (GlcNAc...) asparagine glycosylation is present at N292. Residue D301 participates in L-glutamate binding. K389 provides a ligand contact to L-glutamate. N-linked (GlcNAc...) asparagine glycosylation is found at N414 and N439. The helical transmembrane segment at 578–598 (IGPVTIACLGFMCTCMVITVF) threads the bilayer. At 599 to 613 (IKHNNTPLVKASGRE) the chain is on the cytoplasmic side. The helical transmembrane segment at 614–634 (LCYILLFGVGLSYCMTFFFIA) threads the bilayer. Residues 635–688 (KPSPVICALRRLGLGSSFAICYSALLTKTNCIARIFDGVKNGAQRPKFISPSSQ) are Extracellular-facing. The helical transmembrane segment at 689–709 (VFICLGLILVQIVMVSVWLIL) threads the bilayer. Topologically, residues 710–735 (EAPGTRRYTLAEKRETVILKCNVKDS) are cytoplasmic. Residues 736–756 (SMLISLTYDVILVILCTVYAF) form a helical membrane-spanning segment. The Extracellular segment spans residues 757–769 (KTRKCPENFNEAK). The helical transmembrane segment at 770-790 (FIGFTMYTTCIIWLAFLPIFY) threads the bilayer. The Cytoplasmic portion of the chain corresponds to 791-807 (VTSSDYRVQTTTMCISV). Residues 808 to 828 (SLSGFVVLGCLFAPKVHIILF) form a helical membrane-spanning segment. Residues 829–879 (QPQKNVVTHRLHLNRFSVSGTGTTYSQSSASMYVPTVCNGREVLDSTTSSL) lie on the Extracellular side of the membrane.

The protein belongs to the G-protein coupled receptor 3 family. Interacts with TAMALIN.

It is found in the cell membrane. In terms of biological role, G-protein coupled receptor for glutamate. Ligand binding causes a conformation change that triggers signaling via guanine nucleotide-binding proteins (G proteins) and modulates the activity of down-stream effectors. Signaling inhibits adenylate cyclase activity. The polypeptide is Metabotropic glutamate receptor 3 (GRM3) (Macaca fascicularis (Crab-eating macaque)).